The sequence spans 812 residues: MEAFQELRKPSARLECDHCSFRGTDYENVQIHMGTIHPEFCDEMDAGGLGKMIFYQKSAKLFHCHKCFFTSKMYSNVYYHITSKHASPDKWNDKPKNQLNKETDPVKSPPLPEHQKIPCNSAEPKSIPALSMETQKLGSVLSPESPKPTPLTPLEPQKPGSVVSPELQTPLPSPEPSKPASVSSPEPPKSVPVCESQKLAPVPSPEPQKPAPVSPESVKATLSNPKPQKQSHFPETLGPPSASSPESPVLAASPEPWGPSPAASPESRKSARTTSPEPRKPSPSESPEPWKPFPAVSPEPRRPAPAVSPGSWKPGPPGSPRPWKSNPSASSGPWKPAKPAPSVSPGPWKPIPSVSPGPWKPTPSVSSASWKSSSVSPSSWKSPPASPESWKSGPPELRKTAPTLSPEHWKAVPPVSPELRKPGPPLSPEIRSPAGSPELRKPSGSPDLWKLSPDQRKTSPASLDFPESQKSSRGGSPDLWKSSFFIEPQKPVFPETRKPGPSGPSESPKAASDIWKPVLSIDTEPRKPALFPEPAKTAPPASPEARKRALFPEPRKHALFPELPKSALFSESQKAVELGDELQIDAIDDQKCDILVQEELLASPKKLLEDTLFPSSKKLKKDNQESSDAELSSSEYIKTDLDAMDIKGQESSSDQEQVDVESIDFSKENKMDMTSPEQSRNVLQFTEEKEAFISEEEIAKYMKRGKGKYYCKICCCRAMKKGAVLHHLVNKHNVHSPYKCTICGKAFLLESLLKNHVAAHGQSLLKCPRCNFESNFPRGFKKHLTHCQSRHNEEANKKLMEALEPPLEEQQI.

N-acetylmethionine is present on Met-1. Over residues 86–105 the composition is skewed to basic and acidic residues; that stretch reads ASPDKWNDKPKNQLNKETDP. Disordered regions lie at residues 86–124 and 136–546; these read ASPDKWNDKPKNQLNKETDPVKSPPLPEHQKIPCNSAEP and KLGS…PEAR. A phosphoserine mark is found at Ser-87, Ser-108, Ser-173, Ser-184, Ser-204, Ser-214, and Ser-217. The segment covering 202 to 213 has biased composition (pro residues); it reads VPSPEPQKPAPV. Positions 220–233 are enriched in polar residues; the sequence is ATLSNPKPQKQSHF. Ser-244, Ser-247, Ser-253, Ser-264, Ser-275, Ser-282, Ser-286, Ser-297, Ser-308, Ser-319, Ser-344, Ser-355, Ser-376, Ser-382, and Ser-386 each carry phosphoserine. Positions 271–490 are mediates interaction with MAD2L2; the sequence is ARTTSPEPRK…KSSFFIEPQK (220 aa). Over residues 284–297 the composition is skewed to pro residues; that stretch reads SESPEPWKPFPAVS. Over residues 336-361 the composition is skewed to pro residues; sequence PAKPAPSVSPGPWKPIPSVSPGPWKP. The segment covering 363-392 has biased composition (low complexity); that stretch reads PSVSSASWKSSSVSPSSWKSPPASPESWKS. Phosphothreonine is present on Thr-403. Phosphoserine is present on residues Ser-405, Ser-416, Ser-427, Ser-432, Ser-436, Ser-443, Ser-445, and Ser-452. Residues 451–590 are mediates localization to the spindle and the kinetochore and is required for the attachment of spindle microtubules to the kinetochore; sequence LSPDQRKTSP…ELQIDAIDDQ (140 aa). Thr-458 is subject to Phosphothreonine. Phosphoserine is present on residues Ser-459, Ser-462, Ser-472, and Ser-476. Lys-490 carries the N6-acetyllysine; alternate modification. A Glycyl lysine isopeptide (Lys-Gly) (interchain with G-Cter in SUMO2); alternate cross-link involves residue Lys-490. The segment covering 499-512 has biased composition (low complexity); it reads PGPSGPSESPKAAS. 3 positions are modified to phosphoserine: Ser-507, Ser-512, and Ser-542. Residue Lys-565 forms a Glycyl lysine isopeptide (Lys-Gly) (interchain with G-Cter in SUMO2) linkage. Ser-572 and Ser-603 each carry phosphoserine. Residues 591 to 812 form a mediates localization to the chromosome and the spindle and negatively regulates chromosome alignment region; sequence KCDILVQEEL…LEPPLEEQQI (222 aa). Lys-606 participates in a covalent cross-link: Glycyl lysine isopeptide (Lys-Gly) (interchain with G-Cter in SUMO2). A phosphoserine mark is found at Ser-615, Ser-626, Ser-627, and Ser-632. A Glycyl lysine isopeptide (Lys-Gly) (interchain with G-Cter in SUMO2) cross-link involves residue Lys-638. Phosphoserine is present on residues Ser-651, Ser-652, and Ser-653. A Glycyl lysine isopeptide (Lys-Gly) (interchain with G-Cter in SUMO2) cross-link involves residue Lys-670. At Ser-675 the chain carries Phosphoserine. A Glycyl lysine isopeptide (Lys-Gly) (interchain with G-Cter in SUMO2) cross-link involves residue Lys-689. The residue at position 736 (Ser-736) is a Phosphoserine. The C2H2-type zinc finger occupies 738–760; that stretch reads YKCTICGKAFLLESLLKNHVAAH.

As to quaternary structure, interacts with MAD2L2. Interacts with POGZ, CBX1, CBX3 and CBX5. In terms of processing, phosphorylated by CDK1. Mitotic phosphorylation is required for the attachment of spindle microtubules to the kinetochore.

It localises to the nucleus. Its subcellular location is the chromosome. It is found in the centromere. The protein resides in the kinetochore. The protein localises to the cytoplasm. It localises to the cytoskeleton. Its subcellular location is the spindle. Its function is as follows. Required for proper alignment of chromosomes at metaphase and their accurate segregation during mitosis. Involved in the maintenance of spindle microtubules attachment to the kinetochore during sister chromatid biorientation. May recruit CENPE and CENPF to the kinetochore. In Homo sapiens (Human), this protein is Chromosome alignment-maintaining phosphoprotein 1 (CHAMP1).